We begin with the raw amino-acid sequence, 502 residues long: Archaemetzincin-1 (502 aa).

H262 contacts Zn(2+). E263 (proton acceptor) is an active-site residue. Positions 266, 273, 278, 297, and 300 each coordinate Zn(2+). Residues 336–383 are disordered; the sequence is GEPSVSEDTLPFSADSGMGCESDTEPVTSPSEPVTPDGWSHPFPDGPE.

It belongs to the peptidase M54 family. Zn(2+) serves as cofactor.

Its function is as follows. Probable zinc metalloprotease. The sequence is that of Archaemetzincin-1 (Amz1) from Mus musculus (Mouse).